The sequence spans 89 residues: Protein WFDC9 (89 aa).

The signal sequence occupies residues 1–23 (MKPWILLLVMFISGVVMLLPVLG).

The protein localises to the secreted. The sequence is that of Protein WFDC9 (WFDC9) from Homo sapiens (Human).